A 643-amino-acid polypeptide reads, in one-letter code: Extracellular metalloproteinase 4 (643 aa).

An N-terminal signal peptide occupies residues 1–18 (MHGLLLAGLLALPLNVLA). Residues 19–254 (HPTESHSSGI…VHSVVDYVSA (236 aa)) constitute a propeptide that is removed on maturation. The span at 47–57 (TKSDAVPKQDD) shows a compositional bias: basic and acidic residues. Residues 47-71 (TKSDAVPKQDDESFTTSSTGDDNVS) form a disordered region. Positions 60–71 (FTTSSTGDDNVS) are enriched in polar residues. Residues Asn-271 and Asn-420 are each glycosylated (N-linked (GlcNAc...) asparagine). His-437 contacts Zn(2+). Glu-438 is an active-site residue. A Zn(2+)-binding site is contributed by His-441. An N-linked (GlcNAc...) asparagine glycan is attached at Asn-510.

It belongs to the peptidase M36 family. Zn(2+) is required as a cofactor.

It localises to the secreted. Its function is as follows. Secreted metalloproteinase probably acting as a virulence factor. In Trichophyton equinum (Horse ringworm fungus), this protein is Extracellular metalloproteinase 4 (MEP4).